A 142-amino-acid polypeptide reads, in one-letter code: Large ribosomal subunit protein uL13 (142 aa).

Belongs to the universal ribosomal protein uL13 family. As to quaternary structure, part of the 50S ribosomal subunit.

Its function is as follows. This protein is one of the early assembly proteins of the 50S ribosomal subunit, although it is not seen to bind rRNA by itself. It is important during the early stages of 50S assembly. The polypeptide is Large ribosomal subunit protein uL13 (Syntrophus aciditrophicus (strain SB)).